Here is a 541-residue protein sequence, read N- to C-terminus: Glucose-6-phosphate isomerase (541 aa).

Glutamate 353 acts as the Proton donor in catalysis. Catalysis depends on residues histidine 384 and lysine 504.

The protein belongs to the GPI family.

It is found in the cytoplasm. It catalyses the reaction alpha-D-glucose 6-phosphate = beta-D-fructose 6-phosphate. Its pathway is carbohydrate biosynthesis; gluconeogenesis. It participates in carbohydrate degradation; glycolysis; D-glyceraldehyde 3-phosphate and glycerone phosphate from D-glucose: step 2/4. Functionally, catalyzes the reversible isomerization of glucose-6-phosphate to fructose-6-phosphate. In Deinococcus radiodurans (strain ATCC 13939 / DSM 20539 / JCM 16871 / CCUG 27074 / LMG 4051 / NBRC 15346 / NCIMB 9279 / VKM B-1422 / R1), this protein is Glucose-6-phosphate isomerase.